We begin with the raw amino-acid sequence, 341 residues long: GTP-binding protein GTR2 (341 aa).

The GTP site is built by S23, S24, S43, H124, and D127.

Belongs to the GTR/RAG GTP-binding protein family. Heterodimer; with GTR1. Component of the GSE complex composed of GTR1, GTR2, SLM4, MEH1 and LTV1. Component of the EGO complex, at least composed of GTR2, SLM4 and MEH1. Interacts with GTR1; the interaction is direct.

It localises to the vacuole membrane. The enzyme catalyses GTP + H2O = GDP + phosphate + H(+). Its function is as follows. GTPase involved in activation of the TORC1 signaling pathway, which promotes growth and represses autophagy in nutrient-rich conditions. Also required for TORC1 inactivation during nitrogen starvation. Required for intracellular sorting of GAP1 out of the endosome. Involved in the regulation of microautophagy. In Saccharomyces cerevisiae (strain ATCC 204508 / S288c) (Baker's yeast), this protein is GTP-binding protein GTR2.